Here is an 896-residue protein sequence, read N- to C-terminus: Desmocollin-3 (896 aa).

Residues 1-31 (MVVPEFRSPQCRALCTKLLLTLWVFSFVGEA) form the signal peptide. Positions 32 to 135 (CKKVTFHVPS…KETVLRRSKR (104 aa)) are excised as a propeptide. Cadherin domains lie at 136 to 243 (RWAP…YPLF), 244 to 355 (TEAI…APTF), 356 to 472 (RQNT…GPEC), 473 to 580 (KPPE…EIIQ), and 581 to 691 (DYIV…TLGK). The Extracellular portion of the chain corresponds to 136–695 (RWAPIPCSMQ…GITLGKWAIL (560 aa)). A glycan (N-linked (GlcNAc...) asparagine) is linked at asparagine 166. Asparagine 392 and asparagine 547 each carry an N-linked (GlcNAc...) asparagine glycan. N-linked (GlcNAc...) (high mannose) asparagine glycosylation occurs at asparagine 630. The chain crosses the membrane as a helical span at residues 696–716 (AILLGIALLFSVLLTLVCGVV). At 717 to 896 (TARKGKHFPE…LTLAETCTKR (180 aa)) the chain is on the cytoplasmic side.

In terms of assembly, may form homodimers. Interacts with DSG1; there is evidence to suggest that the interaction promotes cell-cell adhesion of keratinocytes. As to expression, expressed in the basal layers of epidermal stratified epithelia from birth (at protein level).

The protein localises to the cell membrane. The protein resides in the cell junction. It is found in the desmosome. Its subcellular location is the cytoplasm. Functionally, a component of desmosome cell-cell junctions which are required for positive regulation of cellular adhesion. Required for cell-cell adhesion in the epidermis, as a result required for the maintenance of the dermal cohesion and the dermal barrier function. Required for cell-cell adhesion of epithelial cell layers surrounding the telogen hair club, as a result plays an important role in telogen hair shaft anchorage. Essential for successful completion of embryo compaction and development beyond the 8-cell stage. This Mus musculus (Mouse) protein is Desmocollin-3 (Dsc3).